A 493-amino-acid chain; its full sequence is MALLLLGVWGILLLLGLWGLLQGCTRSPSLAPRWPPGPRPLPFLGNLHLLGVTQQDRALMELSERYGPMFTIHLGSQKTVVLSGYEVVREALVGTGHELADRPPIPIFQHIQRGGGIFFSSGARWRAGRQFTVRTLQSLGVQQPSMVGKVLQELACLKGQLDSYGGQPLPLALLGWAPCNITFTLLFGQRFDYQDPVFVSLLSLIDQVMVLLGSPGIQLFNTFPRLGAFLRLHRPVLSKIEEVRTILRTLLETRRPPLPTGGPAQSYVEALLQQGQEDDPEDMFGEANVLACTLDMVMAGTETTAATLQWAVFLMVKHPHVQGRVQEELDRVLGPGQLPQPEHQRALPYTSAVLHEVQRYITLLPHVPRCTAADIQLGGYLLPKGTPVIPLLTSVLLDKTQWETPSQFNPNHFLDAKGRFMKRGAFLPFSAGRRVCVGKSLARTELFLLFAGLLQRYRLLPPPGLSPADLDLRPAPAFTMRPPAQTLCVVPRS.

The N-terminal stretch at 1–23 (MALLLLGVWGILLLLGLWGLLQG) is a signal peptide. N-linked (GlcNAc...) asparagine glycosylation occurs at N180. Residue C436 coordinates heme.

The protein belongs to the cytochrome P450 family. Heme serves as cofactor. Detected in colon, ileum, and testes.

It localises to the endoplasmic reticulum lumen. The protein localises to the cell membrane. It is found in the microsome membrane. It carries out the reaction all-trans-retinoate + reduced [NADPH--hemoprotein reductase] + O2 = all-trans-4-hydroxyretinoate + oxidized [NADPH--hemoprotein reductase] + H2O + H(+). The catalysed reaction is 1-(9Z-octadecenoyl)-sn-glycero-3-phosphocholine + reduced [NADPH--hemoprotein reductase] + O2 = 1-[8-hydroxy-(9Z)-octadecenoyl]-sn-glycero-3-phosphocholine + oxidized [NADPH--hemoprotein reductase] + H2O + H(+). It catalyses the reaction 1-(9Z-octadecenoyl)-sn-glycero-3-phosphocholine + reduced [NADPH--hemoprotein reductase] + O2 = 1-[11-hydroxy-(9Z)-octadecenoyl]-sn-glycero-3-phosphocholine + oxidized [NADPH--hemoprotein reductase] + H2O + H(+). The enzyme catalyses 1-(9Z-octadecenoyl)-sn-glycero-3-phosphocholine + reduced [NADPH--hemoprotein reductase] + O2 = 1-[(9S,10R)-epoxy-octadecanoyl]-sn-glycero-3-phosphocholine + oxidized [NADPH--hemoprotein reductase] + H2O + H(+). It carries out the reaction 1-(9Z-octadecenoyl)-sn-glycero-3-phosphocholine + reduced [NADPH--hemoprotein reductase] + O2 = 1-[(9R,10S)-epoxy-octadecanoyl]-sn-glycero-3-phosphocholine + oxidized [NADPH--hemoprotein reductase] + H2O + H(+). In terms of biological role, a cytochrome P450 monooxygenase that may play a role in retinoid and phospholipid metabolism. Catalyzes the hydroxylation of saturated carbon hydrogen bonds. Hydroxylates all trans-retinoic acid (atRA) to 4-hydroxyretinoate and may regulate atRA clearance. Other retinoids such as all-trans retinol and all-trans retinal are potential endogenous substrates. Catalyzes both epoxidation of double bonds and hydroxylation of carbon hydrogen bonds of the fatty acyl chain of 1-acylphospholipids/2-lysophospholipids. Can metabolize various lysophospholipids classes including lysophosphatidylcholines (LPCs), lysophosphatidylinositols (LPIs), lysophosphatidylserines (LPSs), lysophosphatidylglycerols (LPGs), lysophosphatidylethanolamines (LPEs) and lysophosphatidic acids (LPAs). Has low or no activity toward 2-acylphospholipids/1-lysophospholipids, diacylphospholipids and free fatty acids. May play a role in tumorigenesis by activating procarcinogens such as aflatoxin B1, polycyclic aromatic hydrocarbon dihydrodiols and aromatic amines. Mechanistically, uses molecular oxygen inserting one oxygen atom into a substrate, and reducing the second into a water molecule, with two electrons provided by NADPH via cytochrome P450 reductase (CPR; NADPH-ferrihemoprotein reductase). The polypeptide is Cytochrome P450 2W1 (Cyp2w1) (Mus musculus (Mouse)).